We begin with the raw amino-acid sequence, 250 residues long: Heme oxygenase 2 (250 aa).

Histidine 16 is a heme b binding site. Residues 228 to 250 (QDRPGSTEARSTAGHPITLMVGE) form a disordered region.

This sequence belongs to the heme oxygenase family. As to quaternary structure, homodimer.

The catalysed reaction is heme b + 3 reduced [NADPH--hemoprotein reductase] + 3 O2 = biliverdin IXalpha + CO + Fe(2+) + 3 oxidized [NADPH--hemoprotein reductase] + 3 H2O + H(+). In terms of biological role, catalyzes the opening of the heme ring with the release of iron. Key enzyme in the synthesis of the chromophoric part of the photosynthetic antennae. This Synechocystis sp. (strain ATCC 27184 / PCC 6803 / Kazusa) protein is Heme oxygenase 2 (pbsA2).